The primary structure comprises 475 residues: Ribosomal protein uS12 methylthiotransferase RimO (475 aa).

An MTTase N-terminal domain is found at 5 to 114 (RTVRLIRLGC…IAQRLEDVLA (110 aa)). Positions 14, 49, 78, 174, 178, and 181 each coordinate [4Fe-4S] cluster. Positions 160 to 390 (LDDSPVAPLK…AGIAEEVTAD (231 aa)) constitute a Radical SAM core domain. One can recognise a TRAM domain in the interval 393–461 (RARLGETVDV…GVDFLAAPVT (69 aa)).

The protein belongs to the methylthiotransferase family. RimO subfamily. It depends on [4Fe-4S] cluster as a cofactor.

The protein resides in the cytoplasm. The catalysed reaction is L-aspartate(89)-[ribosomal protein uS12]-hydrogen + (sulfur carrier)-SH + AH2 + 2 S-adenosyl-L-methionine = 3-methylsulfanyl-L-aspartate(89)-[ribosomal protein uS12]-hydrogen + (sulfur carrier)-H + 5'-deoxyadenosine + L-methionine + A + S-adenosyl-L-homocysteine + 2 H(+). Its function is as follows. Catalyzes the methylthiolation of an aspartic acid residue of ribosomal protein uS12. The polypeptide is Ribosomal protein uS12 methylthiotransferase RimO (Acidothermus cellulolyticus (strain ATCC 43068 / DSM 8971 / 11B)).